A 185-amino-acid polypeptide reads, in one-letter code: Ribosome-recycling factor (185 aa).

It belongs to the RRF family.

It localises to the cytoplasm. In terms of biological role, responsible for the release of ribosomes from messenger RNA at the termination of protein biosynthesis. May increase the efficiency of translation by recycling ribosomes from one round of translation to another. This Frankia casuarinae (strain DSM 45818 / CECT 9043 / HFP020203 / CcI3) protein is Ribosome-recycling factor.